A 561-amino-acid chain; its full sequence is Dihydroxy-acid dehydratase 3 (561 aa).

[2Fe-2S] cluster is bound at residue Cys50. Asp82 is a binding site for Mg(2+). Cys123 serves as a coordination point for [2Fe-2S] cluster. Positions 124 and 125 each coordinate Mg(2+). The residue at position 125 (Lys125) is an N6-carboxylysine. Cys195 serves as a coordination point for [2Fe-2S] cluster. Glu447 is a Mg(2+) binding site. The active-site Proton acceptor is the Ser473.

This sequence belongs to the IlvD/Edd family. In terms of assembly, homodimer. It depends on [2Fe-2S] cluster as a cofactor. Mg(2+) is required as a cofactor.

It carries out the reaction (2R)-2,3-dihydroxy-3-methylbutanoate = 3-methyl-2-oxobutanoate + H2O. The enzyme catalyses (2R,3R)-2,3-dihydroxy-3-methylpentanoate = (S)-3-methyl-2-oxopentanoate + H2O. Its pathway is amino-acid biosynthesis; L-isoleucine biosynthesis; L-isoleucine from 2-oxobutanoate: step 3/4. The protein operates within amino-acid biosynthesis; L-valine biosynthesis; L-valine from pyruvate: step 3/4. In terms of biological role, functions in the biosynthesis of branched-chain amino acids. Catalyzes the dehydration of (2R,3R)-2,3-dihydroxy-3-methylpentanoate (2,3-dihydroxy-3-methylvalerate) into 2-oxo-3-methylpentanoate (2-oxo-3-methylvalerate) and of (2R)-2,3-dihydroxy-3-methylbutanoate (2,3-dihydroxyisovalerate) into 2-oxo-3-methylbutanoate (2-oxoisovalerate), the penultimate precursor to L-isoleucine and L-valine, respectively. This chain is Dihydroxy-acid dehydratase 3, found in Bordetella bronchiseptica (strain ATCC BAA-588 / NCTC 13252 / RB50) (Alcaligenes bronchisepticus).